The sequence spans 266 residues: Nickel import ATP-binding protein NikE (266 aa).

Residues 4-252 (ISADNIVKIY…RHPASRLLRE (249 aa)) enclose the ABC transporter domain. 45–52 (GRSGCGKS) is an ATP binding site.

The protein belongs to the ABC transporter superfamily. Nickel importer (TC 3.A.1.5.3) family. The complex is composed of two ATP-binding proteins (NikD and NikE), two transmembrane proteins (NikB and NikC) and a solute-binding protein (NikA).

It localises to the cell inner membrane. It carries out the reaction Ni(2+)(out) + ATP + H2O = Ni(2+)(in) + ADP + phosphate + H(+). Its function is as follows. Part of the ABC transporter complex NikABCDE involved in nickel import. Responsible for energy coupling to the transport system. The chain is Nickel import ATP-binding protein NikE from Brucella suis biovar 1 (strain 1330).